The following is a 278-amino-acid chain: Large ribosomal subunit protein uL2 (278 aa).

Residues 222–278 form a disordered region; that stretch reads GVVMNPVDHPHGGGEGRTSGGRHPVTPWGKPTKGAKTRKNKSTDKFIIRSRHERKKR. Over residues 269–278 the composition is skewed to basic residues; it reads IRSRHERKKR.

The protein belongs to the universal ribosomal protein uL2 family. In terms of assembly, part of the 50S ribosomal subunit. Forms a bridge to the 30S subunit in the 70S ribosome.

Its function is as follows. One of the primary rRNA binding proteins. Required for association of the 30S and 50S subunits to form the 70S ribosome, for tRNA binding and peptide bond formation. It has been suggested to have peptidyltransferase activity; this is somewhat controversial. Makes several contacts with the 16S rRNA in the 70S ribosome. In Maricaulis maris (strain MCS10) (Caulobacter maris), this protein is Large ribosomal subunit protein uL2.